The primary structure comprises 535 residues: CTP synthase (535 aa).

Positions 1–267 (MTKFIFVTGG…DDIVIKRLDL (267 aa)) are amidoligase domain. Ser13 contacts CTP. Ser13 lines the UTP pocket. An ATP-binding site is contributed by 14 to 19 (SLGKGI). Tyr54 is an L-glutamine binding site. An ATP-binding site is contributed by Asp71. Positions 71 and 141 each coordinate Mg(2+). CTP contacts are provided by residues 148–150 (DIE), 188–193 (KTKPTQ), and Lys224. Residues 188-193 (KTKPTQ) and Lys224 contribute to the UTP site. 240-242 (RDA) contacts ATP. The Glutamine amidotransferase type-1 domain occupies 293–535 (TIGLVGKYVS…VEAAYKHQNK (243 aa)). Residue Gly355 coordinates L-glutamine. Catalysis depends on Cys382, which acts as the Nucleophile; for glutamine hydrolysis. Residues 383 to 386 (LGMQ), Glu406, and Arg463 contribute to the L-glutamine site. Catalysis depends on residues His508 and Glu510.

This sequence belongs to the CTP synthase family. In terms of assembly, homotetramer.

The catalysed reaction is UTP + L-glutamine + ATP + H2O = CTP + L-glutamate + ADP + phosphate + 2 H(+). It carries out the reaction L-glutamine + H2O = L-glutamate + NH4(+). The enzyme catalyses UTP + NH4(+) + ATP = CTP + ADP + phosphate + 2 H(+). It participates in pyrimidine metabolism; CTP biosynthesis via de novo pathway; CTP from UDP: step 2/2. Allosterically activated by GTP, when glutamine is the substrate; GTP has no effect on the reaction when ammonia is the substrate. The allosteric effector GTP functions by stabilizing the protein conformation that binds the tetrahedral intermediate(s) formed during glutamine hydrolysis. Inhibited by the product CTP, via allosteric rather than competitive inhibition. In terms of biological role, catalyzes the ATP-dependent amination of UTP to CTP with either L-glutamine or ammonia as the source of nitrogen. Regulates intracellular CTP levels through interactions with the four ribonucleotide triphosphates. This chain is CTP synthase, found in Staphylococcus haemolyticus (strain JCSC1435).